The primary structure comprises 408 residues: Arginine biosynthesis bifunctional protein ArgJ (408 aa).

Residues T156, K182, T193, E279, N403, and T408 each contribute to the substrate site. Residue T193 is the Nucleophile of the active site.

Belongs to the ArgJ family. Heterotetramer of two alpha and two beta chains.

It localises to the cytoplasm. It carries out the reaction N(2)-acetyl-L-ornithine + L-glutamate = N-acetyl-L-glutamate + L-ornithine. It catalyses the reaction L-glutamate + acetyl-CoA = N-acetyl-L-glutamate + CoA + H(+). The protein operates within amino-acid biosynthesis; L-arginine biosynthesis; L-ornithine and N-acetyl-L-glutamate from L-glutamate and N(2)-acetyl-L-ornithine (cyclic): step 1/1. It participates in amino-acid biosynthesis; L-arginine biosynthesis; N(2)-acetyl-L-ornithine from L-glutamate: step 1/4. Functionally, catalyzes two activities which are involved in the cyclic version of arginine biosynthesis: the synthesis of N-acetylglutamate from glutamate and acetyl-CoA as the acetyl donor, and of ornithine by transacetylation between N(2)-acetylornithine and glutamate. The polypeptide is Arginine biosynthesis bifunctional protein ArgJ (Methylococcus capsulatus (strain ATCC 33009 / NCIMB 11132 / Bath)).